The primary structure comprises 1416 residues: K homology domain-containing protein 4 (1416 aa).

Disordered regions lie at residues 25-76 (NPNG…TSMR), 108-174 (KAEA…TRSS), 196-225 (VNSS…LSQS), 255-320 (QNDE…FPGR), and 341-385 (SSLN…MPKP). 3 stretches are compositionally biased toward low complexity: residues 196–213 (VNSS…SANH), 273–285 (QSSF…LDQL), and 341–350 (SSLNPPASGS). Polar residues predominate over residues 357–369 (GLSSAQPLRSPQP). KH domains lie at 412–504 (FKST…VILD), 508–594 (GLRS…QVSM), 747–816 (FEVR…EELP), 817–892 (AEMS…SVME), and 900–968 (DYIS…DHVP). Disordered stretches follow at residues 1215 to 1240 (AGVS…SGHR) and 1289 to 1416 (HASG…FDRA). Residues 1219–1239 (VPTSGGIQFPSQPSLHQQSGH) are compositionally biased toward polar residues. Positions 1343 to 1374 (QQQAQQQLQYQQQQQQQQQQQQQPGYGMPHQP) are enriched in low complexity. Residues 1391 to 1402 (RNTQNPDSTTMD) show a composition bias toward polar residues.

In terms of biological role, RNA-binding protein that recognizes the sequence AUACCC via its tandem KH domains 3 and 4, probably in order to promote mRNA instability. Plays an essential role in filamentous growth and virulence. The chain is K homology domain-containing protein 4 from Mycosarcoma maydis (Corn smut fungus).